The chain runs to 116 residues: Small ribosomal subunit protein uS13 (116 aa).

Residues 92–116 are disordered; that stretch reads RRGLPVRGQNTKNNARTRKGTKRNR. Positions 106 to 116 are enriched in basic residues; sequence ARTRKGTKRNR.

The protein belongs to the universal ribosomal protein uS13 family. Part of the 30S ribosomal subunit. Forms a loose heterodimer with protein S19. Forms two bridges to the 50S subunit in the 70S ribosome.

Its function is as follows. Located at the top of the head of the 30S subunit, it contacts several helices of the 16S rRNA. In the 70S ribosome it contacts the 23S rRNA (bridge B1a) and protein L5 of the 50S subunit (bridge B1b), connecting the 2 subunits; these bridges are implicated in subunit movement. Contacts the tRNAs in the A and P-sites. The sequence is that of Small ribosomal subunit protein uS13 from Lactobacillus acidophilus (strain ATCC 700396 / NCK56 / N2 / NCFM).